We begin with the raw amino-acid sequence, 276 residues long: Adenylate kinase (276 aa).

An ATP-binding site is contributed by 38-43 (GSGKGT). The tract at residues 58–87 (STGDMLRAAIEQGTETGKQAKTIMDQGGLV) is NMP. AMP contacts are provided by residues threonine 59, arginine 64, 85–87 (GLV), 113–116 (GFPR), and glutamine 120. The LID stretch occupies residues 154-191 (GRLVHPSSGRSYHREFFPPKVDMIDDITGEPLIQRSDD). Residues arginine 155 and 164–165 (SY) each bind ATP. 2 residues coordinate AMP: arginine 188 and arginine 199. ATP is bound at residue lysine 227.

This sequence belongs to the adenylate kinase family. AK2 subfamily. In terms of assembly, monomer.

The protein localises to the cytoplasm. It is found in the cytosol. The protein resides in the mitochondrion intermembrane space. The catalysed reaction is AMP + ATP = 2 ADP. Its function is as follows. Catalyzes the reversible transfer of the terminal phosphate group between ATP and AMP. Plays an important role in cellular energy homeostasis and in adenine nucleotide metabolism. Adenylate kinase activity is critical for regulation of the phosphate utilization and the AMP de novo biosynthesis pathways. The protein is Adenylate kinase (adkA) of Dictyostelium discoideum (Social amoeba).